The chain runs to 472 residues: Cysteine--tRNA ligase (472 aa).

Cysteine 29 contributes to the Zn(2+) binding site. The short motif at 31–41 is the 'HIGH' region element; sequence ITVYDYCHLGH. Residues cysteine 214, histidine 239, and glutamate 243 each contribute to the Zn(2+) site. A 'KMSKS' region motif is present at residues 271 to 275; sequence KMSKS. Lysine 274 is a binding site for ATP.

It belongs to the class-I aminoacyl-tRNA synthetase family. Monomer. The cofactor is Zn(2+).

The protein localises to the cytoplasm. It catalyses the reaction tRNA(Cys) + L-cysteine + ATP = L-cysteinyl-tRNA(Cys) + AMP + diphosphate. The sequence is that of Cysteine--tRNA ligase from Picosynechococcus sp. (strain ATCC 27264 / PCC 7002 / PR-6) (Agmenellum quadruplicatum).